The sequence spans 134 residues: Ribonuclease VapC1 (134 aa).

The region spanning 3 to 132 is the PINc domain; that stretch reads YMLDTNIIIY…RITDLQWQDW (130 aa). Mg(2+)-binding residues include D6 and D99.

The protein belongs to the PINc/VapC protein family. Mg(2+) serves as cofactor.

Functionally, toxic component of a type II toxin-antitoxin (TA) system. Acts as an RNase, its toxic effect is neutralized by VapB1 antitoxin. In Haemophilus influenzae (strain ATCC 51907 / DSM 11121 / KW20 / Rd), this protein is Ribonuclease VapC1.